A 244-amino-acid chain; its full sequence is tRNA (guanine-N(1)-)-methyltransferase (244 aa).

Residues Gly113 and 133–138 (IGDYVL) contribute to the S-adenosyl-L-methionine site.

Belongs to the RNA methyltransferase TrmD family. In terms of assembly, homodimer.

The protein resides in the cytoplasm. It catalyses the reaction guanosine(37) in tRNA + S-adenosyl-L-methionine = N(1)-methylguanosine(37) in tRNA + S-adenosyl-L-homocysteine + H(+). Its function is as follows. Specifically methylates guanosine-37 in various tRNAs. The protein is tRNA (guanine-N(1)-)-methyltransferase of Bacillus cereus (strain G9842).